Here is a 310-residue protein sequence, read N- to C-terminus: Aspartate carbamoyltransferase catalytic subunit (310 aa).

Arg-57 and Thr-58 together coordinate carbamoyl phosphate. An L-aspartate-binding site is contributed by Lys-86. Residues Arg-107, His-135, and Gln-138 each contribute to the carbamoyl phosphate site. Residues Arg-168 and Arg-229 each coordinate L-aspartate. Carbamoyl phosphate contacts are provided by Leu-268 and Pro-269.

Belongs to the aspartate/ornithine carbamoyltransferase superfamily. ATCase family. Heterooligomer of catalytic and regulatory chains.

It carries out the reaction carbamoyl phosphate + L-aspartate = N-carbamoyl-L-aspartate + phosphate + H(+). It participates in pyrimidine metabolism; UMP biosynthesis via de novo pathway; (S)-dihydroorotate from bicarbonate: step 2/3. In terms of biological role, catalyzes the condensation of carbamoyl phosphate and aspartate to form carbamoyl aspartate and inorganic phosphate, the committed step in the de novo pyrimidine nucleotide biosynthesis pathway. This Thermococcus onnurineus (strain NA1) protein is Aspartate carbamoyltransferase catalytic subunit.